A 227-amino-acid chain; its full sequence is Cytochrome c oxidase subunit 2 (227 aa).

Residues 1-14 (MAYPLQLGFQDATS) lie on the Mitochondrial intermembrane side of the membrane. The chain crosses the membrane as a helical span at residues 15 to 45 (PVMEELLHFHDHTLMIIFLISSLVLYIIMLM). The Mitochondrial matrix portion of the chain corresponds to 46-59 (LTTKLVHTNMMNVQ). Residues 60–87 (EMEMIWTILPAIILILIALPSLHTLYMM) traverse the membrane as a helical segment. Topologically, residues 88–227 (DEINNPLLTI…YFESWSASLA (140 aa)) are mitochondrial intermembrane. Cu cation-binding residues include His161, Cys196, Glu198, Cys200, His204, and Met207. Residue Glu198 coordinates Mg(2+). At Tyr218 the chain carries Phosphotyrosine.

It belongs to the cytochrome c oxidase subunit 2 family. Component of the cytochrome c oxidase (complex IV, CIV), a multisubunit enzyme composed of 14 subunits. The complex is composed of a catalytic core of 3 subunits MT-CO1, MT-CO2 and MT-CO3, encoded in the mitochondrial DNA, and 11 supernumerary subunits COX4I, COX5A, COX5B, COX6A, COX6B, COX6C, COX7A, COX7B, COX7C, COX8 and NDUFA4, which are encoded in the nuclear genome. The complex exists as a monomer or a dimer and forms supercomplexes (SCs) in the inner mitochondrial membrane with NADH-ubiquinone oxidoreductase (complex I, CI) and ubiquinol-cytochrome c oxidoreductase (cytochrome b-c1 complex, complex III, CIII), resulting in different assemblies (supercomplex SCI(1)III(2)IV(1) and megacomplex MCI(2)III(2)IV(2)). Found in a complex with TMEM177, COA6, COX18, COX20, SCO1 and SCO2. Interacts with TMEM177 in a COX20-dependent manner. Interacts with COX20. Interacts with COX16. Cu cation is required as a cofactor.

It localises to the mitochondrion inner membrane. The enzyme catalyses 4 Fe(II)-[cytochrome c] + O2 + 8 H(+)(in) = 4 Fe(III)-[cytochrome c] + 2 H2O + 4 H(+)(out). Functionally, component of the cytochrome c oxidase, the last enzyme in the mitochondrial electron transport chain which drives oxidative phosphorylation. The respiratory chain contains 3 multisubunit complexes succinate dehydrogenase (complex II, CII), ubiquinol-cytochrome c oxidoreductase (cytochrome b-c1 complex, complex III, CIII) and cytochrome c oxidase (complex IV, CIV), that cooperate to transfer electrons derived from NADH and succinate to molecular oxygen, creating an electrochemical gradient over the inner membrane that drives transmembrane transport and the ATP synthase. Cytochrome c oxidase is the component of the respiratory chain that catalyzes the reduction of oxygen to water. Electrons originating from reduced cytochrome c in the intermembrane space (IMS) are transferred via the dinuclear copper A center (CU(A)) of subunit 2 and heme A of subunit 1 to the active site in subunit 1, a binuclear center (BNC) formed by heme A3 and copper B (CU(B)). The BNC reduces molecular oxygen to 2 water molecules using 4 electrons from cytochrome c in the IMS and 4 protons from the mitochondrial matrix. The protein is Cytochrome c oxidase subunit 2 (MT-CO2) of Mammuthus primigenius (Siberian woolly mammoth).